The chain runs to 206 residues: Small ribosomal subunit protein uS5 (206 aa).

A compositionally biased stretch (polar residues) spans 1–15; the sequence is MTDTPTKQEIQSKND. The tract at residues 1-50 is disordered; that stretch reads MTDTPTKQEIQSKNDNVPGATPVEQKKNNRNDRKRNRRGDSKNLERDSDW. Over residues 38–50 the composition is skewed to basic and acidic residues; the sequence is RGDSKNLERDSDW. Residues 50–113 enclose the S5 DRBM domain; sequence WQERVVQIRR…SDGKKNLVRV (64 aa).

This sequence belongs to the universal ribosomal protein uS5 family. In terms of assembly, part of the 30S ribosomal subunit. Contacts proteins S4 and S8.

Functionally, with S4 and S12 plays an important role in translational accuracy. In terms of biological role, located at the back of the 30S subunit body where it stabilizes the conformation of the head with respect to the body. The polypeptide is Small ribosomal subunit protein uS5 (Prochlorococcus marinus (strain MIT 9301)).